An 898-amino-acid polypeptide reads, in one-letter code: Alanine--tRNA ligase (898 aa).

Zn(2+) is bound by residues H582, H586, C685, and H689.

This sequence belongs to the class-II aminoacyl-tRNA synthetase family. Zn(2+) is required as a cofactor.

It localises to the cytoplasm. The catalysed reaction is tRNA(Ala) + L-alanine + ATP = L-alanyl-tRNA(Ala) + AMP + diphosphate. Functionally, catalyzes the attachment of alanine to tRNA(Ala) in a two-step reaction: alanine is first activated by ATP to form Ala-AMP and then transferred to the acceptor end of tRNA(Ala). Also edits incorrectly charged Ser-tRNA(Ala) and Gly-tRNA(Ala) via its editing domain. The sequence is that of Alanine--tRNA ligase from Mycolicibacterium gilvum (strain PYR-GCK) (Mycobacterium gilvum (strain PYR-GCK)).